A 357-amino-acid polypeptide reads, in one-letter code: Mitochondrial carrier protein LEU5 (357 aa).

The next 6 helical transmembrane spans lie at 31–47, 103–119, 136–153, 208–228, 269–285, and 325–347; these read DYIV…GSCA, LRIF…YEQI, LVSG…TYPL, VPTV…HDLL, ISGG…AYPF, and GFFV…SFFV. 3 Solcar repeats span residues 31 to 122, 130 to 231, and 262 to 354; these read DYIV…IRNT, ESHW…LHDV, and LRTW…MKWN.

The protein belongs to the mitochondrial carrier (TC 2.A.29) family.

It is found in the mitochondrion inner membrane. Its function is as follows. Required for the accumulation of coenzyme A in the mitochondrial matrix. The sequence is that of Mitochondrial carrier protein LEU5 (LEU5) from Saccharomyces cerevisiae (strain ATCC 204508 / S288c) (Baker's yeast).